The primary structure comprises 805 residues: Leucine--tRNA ligase (805 aa).

A 'HIGH' region motif is present at residues 40–51; the sequence is PYPSGQGLHVGH. Residues 577-581 carry the 'KMSKS' region motif; that stretch reads KMSKS. Lysine 580 serves as a coordination point for ATP.

Belongs to the class-I aminoacyl-tRNA synthetase family.

The protein resides in the cytoplasm. It catalyses the reaction tRNA(Leu) + L-leucine + ATP = L-leucyl-tRNA(Leu) + AMP + diphosphate. The sequence is that of Leucine--tRNA ligase from Limosilactobacillus fermentum (strain NBRC 3956 / LMG 18251) (Lactobacillus fermentum).